We begin with the raw amino-acid sequence, 461 residues long: Cysteine--tRNA ligase (461 aa).

A Zn(2+)-binding site is contributed by C29. The 'HIGH' region signature appears at 31–41; it reads MTIYDLCHVGH. Zn(2+) is bound by residues C213, H238, and E242. Positions 274–278 match the 'KMSKS' region motif; the sequence is KMSKS. K277 serves as a coordination point for ATP.

The protein belongs to the class-I aminoacyl-tRNA synthetase family. Monomer. Requires Zn(2+) as cofactor.

The protein resides in the cytoplasm. The catalysed reaction is tRNA(Cys) + L-cysteine + ATP = L-cysteinyl-tRNA(Cys) + AMP + diphosphate. The chain is Cysteine--tRNA ligase from Methylibium petroleiphilum (strain ATCC BAA-1232 / LMG 22953 / PM1).